Consider the following 318-residue polypeptide: Porphobilinogen deaminase (318 aa).

At C241 the chain carries S-(dipyrrolylmethanemethyl)cysteine.

This sequence belongs to the HMBS family. As to quaternary structure, monomer. Dipyrromethane serves as cofactor.

It catalyses the reaction 4 porphobilinogen + H2O = hydroxymethylbilane + 4 NH4(+). It participates in porphyrin-containing compound metabolism; protoporphyrin-IX biosynthesis; coproporphyrinogen-III from 5-aminolevulinate: step 2/4. Tetrapolymerization of the monopyrrole PBG into the hydroxymethylbilane pre-uroporphyrinogen in several discrete steps. In Geotalea uraniireducens (strain Rf4) (Geobacter uraniireducens), this protein is Porphobilinogen deaminase.